The primary structure comprises 141 residues: Galactose-6-phosphate isomerase subunit LacA (141 aa).

This sequence belongs to the LacAB/RpiB family. As to quaternary structure, heteromultimeric protein consisting of LacA and LacB.

The catalysed reaction is aldehydo-D-galactose 6-phosphate = keto-D-tagatose 6-phosphate. The protein operates within carbohydrate metabolism; D-galactose 6-phosphate degradation; D-tagatose 6-phosphate from D-galactose 6-phosphate: step 1/1. The protein is Galactose-6-phosphate isomerase subunit LacA of Streptococcus pneumoniae (strain Taiwan19F-14).